Here is a 363-residue protein sequence, read N- to C-terminus: Two-pore potassium channel 1 (363 aa).

The disordered stretch occupies residues 1–61 (MSSDAARTPL…DDVKIDEPPP (61 aa)). At 1–78 (MSSDAARTPL…FSDLNPNLRR (78 aa)) the chain is on the cytoplasmic side. Positions 31 to 42 (SSRKRRLRRSRS) are enriched in basic residues. A helical membrane pass occupies residues 79–99 (VIMFLALYLTIGTLCFYLVRD). Positions 111–130 (DALYFCIVTMTTVGYGDLVP) form an intramembrane region, pore-forming. The helical transmembrane segment at 137-157 (LLACAFVFSGMVLVGHLLSRA) threads the bilayer. At 158-197 (ADYLVEKQEALLVRAFHLRQSFGPTDILKELHTNKLRYKC) the chain is on the cytoplasmic side. Residues 198 to 218 (YATCLVLVVLFIVGTIFLVMV) form a helical membrane-spanning segment. Residues 225–244 (SAFYCVCSTVTTLGYGDKSF) constitute an intramembrane region (pore-forming). A helical membrane pass occupies residues 251 to 271 (LFAVFWILTSSICLAQFFLYV). At 272 to 363 (AELNTENKQR…LAQTTSQIQR (92 aa)) the chain is on the cytoplasmic side. EF-hand domains follow at residues 288 to 323 (LTRR…EMGK) and 327 to 362 (KDIS…SQIQ). An Endoplasmic reticulum release signal motif is present at residues 296-298 (DLE). Ca(2+) is bound by residues aspartate 301, aspartate 303, aspartate 305, glutamate 312, aspartate 340, aspartate 342, serine 344, threonine 346, and aspartate 351.

Belongs to the two pore domain potassium channel (TC 1.A.1.7) family. As to quaternary structure, homodimer. Interacts with GRF1 and GRF6, but only GRF6 modulates the channel activity. In terms of processing, phosphorylation at Ser-42 increases and stabilizes the interaction with 14-3-3 proteins. Detected in mesophyll cells, guard cells and vascular tissues of the leaves. Expressed in the hilum, where the funiculus is attached during fruit maturation and in the embryo. Also expressed at a lower level in seedlings, root tips and elongation zones, and flowers. Could be detected in mitotically active tissues.

Its subcellular location is the vacuole membrane. Its activity is regulated as follows. Could be activated by protein kinase C. Strongly induced by calcium. Blocked by barium, tetraethylammonium (TEA), quinine and quinidine. In terms of biological role, voltage-independent, large conductance and potassium-selective tonoplast ion channel. Regulated by cytoplasmic calcium and pH. Does not mediate slow-vacuolar (SV) ionic currents, but essential to establish VK currents. Has some permeability for Rb(+) and NH(4)(+), but none for Na(+), Cs(+) or Li(+). Involved in intracellular K(+) redistribution and/or K(+) retranslocation between different tissues. The chain is Two-pore potassium channel 1 (TPK1) from Arabidopsis thaliana (Mouse-ear cress).